Here is a 248-residue protein sequence, read N- to C-terminus: ATP synthase subunit a, chloroplastic (248 aa).

A run of 5 helical transmembrane segments spans residues 38 to 58 (QVLITSWIVIAVLLGSATIAV), 96 to 116 (VPFIGTMFLFIFVSNWSGALL), 135 to 155 (INTTVALALLTSVAYFYAGLA), 200 to 220 (LVVAVLVSPVPLVVPIPVMFL), and 221 to 241 (GLFTSGIQALIFATLAAAYIG).

This sequence belongs to the ATPase A chain family. In terms of assembly, F-type ATPases have 2 components, CF(1) - the catalytic core - and CF(0) - the membrane proton channel. CF(1) has five subunits: alpha(3), beta(3), gamma(1), delta(1), epsilon(1). CF(0) has four main subunits: a, b, b' and c.

The protein resides in the plastid. It localises to the chloroplast thylakoid membrane. Its function is as follows. Key component of the proton channel; it plays a direct role in the translocation of protons across the membrane. This Pinus koraiensis (Korean pine) protein is ATP synthase subunit a, chloroplastic.